Consider the following 194-residue polypeptide: NADH-quinone oxidoreductase subunit B (194 aa).

A disordered region spans residues 1 to 26 (MGLTPSATKPEIAQAPQGIVDPSTGR). [4Fe-4S] cluster contacts are provided by Cys73, Cys74, Cys138, and Cys168.

This sequence belongs to the complex I 20 kDa subunit family. In terms of assembly, NDH-1 is composed of 14 different subunits. Subunits NuoB, C, D, E, F, and G constitute the peripheral sector of the complex. [4Fe-4S] cluster serves as cofactor.

Its subcellular location is the cell inner membrane. The catalysed reaction is a quinone + NADH + 5 H(+)(in) = a quinol + NAD(+) + 4 H(+)(out). Functionally, NDH-1 shuttles electrons from NADH, via FMN and iron-sulfur (Fe-S) centers, to quinones in the respiratory chain. The immediate electron acceptor for the enzyme in this species is believed to be ubiquinone. Couples the redox reaction to proton translocation (for every two electrons transferred, four hydrogen ions are translocated across the cytoplasmic membrane), and thus conserves the redox energy in a proton gradient. The protein is NADH-quinone oxidoreductase subunit B of Xanthobacter autotrophicus (strain ATCC BAA-1158 / Py2).